The sequence spans 421 residues: Cell division protein FtsA (421 aa).

Belongs to the FtsA/MreB family. As to quaternary structure, self-interacts. Interacts with FtsZ.

It localises to the cell membrane. Its function is as follows. Cell division protein that is involved in the assembly of the Z ring. May serve as a membrane anchor for the Z ring. The polypeptide is Cell division protein FtsA (Buchnera aphidicola subsp. Baizongia pistaciae (strain Bp)).